A 339-amino-acid polypeptide reads, in one-letter code: Glycerol-3-phosphate dehydrogenase [NAD(P)+] (339 aa).

Positions 15, 16, 36, and 110 each coordinate NADPH. Sn-glycerol 3-phosphate is bound by residues lysine 110, glycine 139, and threonine 141. Position 143 (alanine 143) interacts with NADPH. Sn-glycerol 3-phosphate contacts are provided by lysine 195, aspartate 248, serine 258, arginine 259, and asparagine 260. The Proton acceptor role is filled by lysine 195. Arginine 259 contacts NADPH. Residues valine 283 and glutamate 285 each coordinate NADPH.

The protein belongs to the NAD-dependent glycerol-3-phosphate dehydrogenase family.

The protein resides in the cytoplasm. It carries out the reaction sn-glycerol 3-phosphate + NAD(+) = dihydroxyacetone phosphate + NADH + H(+). It catalyses the reaction sn-glycerol 3-phosphate + NADP(+) = dihydroxyacetone phosphate + NADPH + H(+). Its pathway is membrane lipid metabolism; glycerophospholipid metabolism. Catalyzes the reduction of the glycolytic intermediate dihydroxyacetone phosphate (DHAP) to sn-glycerol 3-phosphate (G3P), the key precursor for phospholipid synthesis. This is Glycerol-3-phosphate dehydrogenase [NAD(P)+] from Escherichia fergusonii (strain ATCC 35469 / DSM 13698 / CCUG 18766 / IAM 14443 / JCM 21226 / LMG 7866 / NBRC 102419 / NCTC 12128 / CDC 0568-73).